The chain runs to 180 residues: tRNA (cytidine(56)-2'-O)-methyltransferase (180 aa).

S-adenosyl-L-methionine-binding positions include Leu84 and Gly112–Val116.

Belongs to the aTrm56 family. Homodimer.

Its subcellular location is the cytoplasm. The enzyme catalyses cytidine(56) in tRNA + S-adenosyl-L-methionine = 2'-O-methylcytidine(56) in tRNA + S-adenosyl-L-homocysteine + H(+). Functionally, specifically catalyzes the AdoMet-dependent 2'-O-ribose methylation of cytidine at position 56 in tRNAs. This is tRNA (cytidine(56)-2'-O)-methyltransferase from Natronomonas pharaonis (strain ATCC 35678 / DSM 2160 / CIP 103997 / JCM 8858 / NBRC 14720 / NCIMB 2260 / Gabara) (Halobacterium pharaonis).